We begin with the raw amino-acid sequence, 138 residues long: MRHGKAHRKLGRTSAHRTAMFANMSASLIKHEQIVTTLPKAKELRPFVEKLVTLAKRGDLHARRQAISHVRDVEQVGKLFAVLGPRYKDRNGGYIRVLKAGYRHGDNAPMAVIEFVDRDPAEKGKDSGPVAEAAFAEA.

It belongs to the bacterial ribosomal protein bL17 family. As to quaternary structure, part of the 50S ribosomal subunit. Contacts protein L32.

The polypeptide is Large ribosomal subunit protein bL17 (Phenylobacterium zucineum (strain HLK1)).